Reading from the N-terminus, the 142-residue chain is MAGIGPITQDWEPVVIRKRAPNAAAKRDEKTVNAARRSGADIETVRKFNAGSNKAASSGTSLNTKKLDDDTENLSHDRVPTELKKAIMQARGEKKLTQSQLAHLINEKPQVIQEYESGKAIPNQQILSKLERALGAKLRGKK.

The interval 49–75 (NAGSNKAASSGTSLNTKKLDDDTENLS) is disordered. The span at 50–64 (AGSNKAASSGTSLNT) shows a compositional bias: polar residues. The span at 65–75 (KKLDDDTENLS) shows a compositional bias: basic and acidic residues. The region spanning 87–141 (IMQARGEKKLTQSQLAHLINEKPQVIQEYESGKAIPNQQILSKLERALGAKLRGK) is the HTH cro/C1-type domain. The segment at residues 98–117 (QSQLAHLINEKPQVIQEYES) is a DNA-binding region (H-T-H motif).

Belongs to the MBF1 family. As to expression, expressed in leaves, roots, stems, petioles and shoots. Higher expression in flowers and siliques. Detected in leaf veins through development.

Its subcellular location is the nucleus. The protein resides in the nucleolus. Its function is as follows. Transcriptional coactivator that stimulates transcriptional activity by bridging regulatory proteins and TBP, thereby recruiting TBP to promoters occupied by DNA-binding regulators. This chain is Multiprotein-bridging factor 1b (MBF1B), found in Arabidopsis thaliana (Mouse-ear cress).